The following is a 456-amino-acid chain: Divalent metal cation transporter MntH (456 aa).

A run of 11 helical transmembrane segments spans residues 47 to 67, 77 to 97, 123 to 143, 151 to 171, 184 to 204, 227 to 247, 276 to 296, 316 to 336, 369 to 389, 392 to 412, and 422 to 442; these read ALSFFGPGYLVAVGYMDPGNW, FGYALLSVVLLSNLMAVLLQA, AWPLWLLAELAICATDLAEVI, LLFGIPLEIGVILTAVDVLLV, ALIITLLGVIALCFLTQIIMA, MLYIALGIIGATVMPHNLYLH, IALTFALVINASILILAAASF, PLLGSAIAPALFAIALLCCGL, FVAIVPAAIVTILYGSQGTTE, ILSQVVLSLQLPFAVIPLVIF, and LAAAPWVTFLAAITAAIIVVL.

The protein belongs to the NRAMP family.

It localises to the cell inner membrane. In terms of biological role, h(+)-stimulated, divalent metal cation uptake system. The chain is Divalent metal cation transporter MntH from Brucella suis biovar 1 (strain 1330).